The primary structure comprises 426 residues: D-tagatose-1,6-bisphosphate aldolase subunit KbaZ (426 aa).

It belongs to the GatZ/KbaZ family. KbaZ subfamily. As to quaternary structure, forms a complex with KbaY.

Its pathway is carbohydrate metabolism; D-tagatose 6-phosphate degradation; D-glyceraldehyde 3-phosphate and glycerone phosphate from D-tagatose 6-phosphate: step 2/2. Its function is as follows. Component of the tagatose-1,6-bisphosphate aldolase KbaYZ that is required for full activity and stability of the Y subunit. Could have a chaperone-like function for the proper and stable folding of KbaY. When expressed alone, KbaZ does not show any aldolase activity. This is D-tagatose-1,6-bisphosphate aldolase subunit KbaZ from Escherichia coli O7:K1 (strain IAI39 / ExPEC).